Reading from the N-terminus, the 98-residue chain is Integration host factor subunit beta (98 aa).

Belongs to the bacterial histone-like protein family. As to quaternary structure, heterodimer of an alpha and a beta chain.

Its function is as follows. This protein is one of the two subunits of integration host factor, a specific DNA-binding protein that functions in genetic recombination as well as in transcriptional and translational control. This Pseudomonas putida (strain GB-1) protein is Integration host factor subunit beta.